The primary structure comprises 325 residues: Aerobic respiration control sensor protein ArcB homolog (325 aa).

Residues 1 to 26 (MKNFKYFAQSYVDWVIRLGRLRFSLL) are Cytoplasmic-facing. The chain crosses the membrane as a helical span at residues 27-47 (GVMILAVLALCTQILFSLFIV). Topologically, residues 48 to 57 (HQISWVDIFR) are periplasmic. A helical transmembrane segment spans residues 58 to 78 (SVTFGLLTAPFVIYFFTLLVE). Over 79–325 (KLEHSRLDLS…AQLMGRGFNS (247 aa)) the chain is Cytoplasmic. A Histidine kinase domain is found at 128 to 325 (TISHEFRTPL…AQLMGRGFNS (198 aa)). Phosphohistidine; by autocatalysis is present on histidine 131.

The protein localises to the cell inner membrane. It carries out the reaction ATP + protein L-histidine = ADP + protein N-phospho-L-histidine.. Functionally, member of the two-component regulatory system ArcB/ArcA. Activates ArcA by phosphorylation. The polypeptide is Aerobic respiration control sensor protein ArcB homolog (arcB) (Haemophilus influenzae (strain ATCC 51907 / DSM 11121 / KW20 / Rd)).